A 372-amino-acid polypeptide reads, in one-letter code: BTB/POZ and TAZ domain-containing protein 4 (372 aa).

Residues 14–37 (SADSSSVPIPPPLPSKSDGLKKKL) are disordered. The region spanning 60–128 (ADVVIYTDNG…LYSSCYEKEE (69 aa)) is the BTB domain. A TAZ-type zinc finger spans residues 238–330 (RIYSQLYEAM…SDQCRVPLCR (93 aa)). The caM-binding stretch occupies residues 341–364 (KKDESRWKLLVKNVLGSKKIGGSP).

In terms of assembly, interacts with GTE11/BET10 through the BTB domain. Preferentially expressed in leaves, stems and flowers.

Its subcellular location is the cytoplasm. Its pathway is protein modification; protein ubiquitination. Its function is as follows. May act as a substrate-specific adapter of an E3 ubiquitin-protein ligase complex (CUL3-RBX1-BTB) which mediates the ubiquitination and subsequent proteasomal degradation of target proteins. In Arabidopsis thaliana (Mouse-ear cress), this protein is BTB/POZ and TAZ domain-containing protein 4 (BT4).